The following is a 140-amino-acid chain: Calcium-binding protein B (140 aa).

EF-hand domains are found at residues Ala-38 to Pro-73 and Lys-74 to Ser-109. 5 residues coordinate Ca(2+): Asp-51, Asn-53, Ser-55, Asp-57, and Glu-62.

The polypeptide is Calcium-binding protein B (cbpB) (Dictyostelium discoideum (Social amoeba)).